A 201-amino-acid chain; its full sequence is Large ribosomal subunit protein uL18 (201 aa).

It belongs to the universal ribosomal protein uL18 family. Part of the 50S ribosomal subunit. Contacts the 5S and 23S rRNAs.

In terms of biological role, this is one of the proteins that bind and probably mediate the attachment of the 5S RNA into the large ribosomal subunit, where it forms part of the central protuberance. The chain is Large ribosomal subunit protein uL18 from Thermococcus onnurineus (strain NA1).